The following is a 178-amino-acid chain: MCIQPNDNWQWHYDAHDDRLMLDLSDRMIFATEYKGRQLVPSSFTTQPFCVDDAALYYQLMDRVAELEWSVPHQVQLVLNAIAVSRFYKPLMPQSWFFGETHPAIIPETGALVCMGTPHGKGEFLVIEAGEQASVCLNLTDDLILTTSKTLPRFGVIKVMNNRMSPRPVAQAQYRQVS.

It belongs to the ZapC family. Interacts directly with FtsZ.

It localises to the cytoplasm. Functionally, contributes to the efficiency of the cell division process by stabilizing the polymeric form of the cell division protein FtsZ. Acts by promoting interactions between FtsZ protofilaments and suppressing the GTPase activity of FtsZ. The sequence is that of Cell division protein ZapC from Aeromonas hydrophila subsp. hydrophila (strain ATCC 7966 / DSM 30187 / BCRC 13018 / CCUG 14551 / JCM 1027 / KCTC 2358 / NCIMB 9240 / NCTC 8049).